The following is a 409-amino-acid chain: tRNA(Met) cytidine acetate ligase (409 aa).

ATP is bound by residues 7 to 20, glycine 102, asparagine 169, and arginine 194; that span reads VVEY…HLYH.

It belongs to the TmcAL family.

Its subcellular location is the cytoplasm. The catalysed reaction is cytidine(34) in elongator tRNA(Met) + acetate + ATP = N(4)-acetylcytidine(34) in elongator tRNA(Met) + AMP + diphosphate. Catalyzes the formation of N(4)-acetylcytidine (ac(4)C) at the wobble position of elongator tRNA(Met), using acetate and ATP as substrates. First activates an acetate ion to form acetyladenylate (Ac-AMP) and then transfers the acetyl group to tRNA to form ac(4)C34. This chain is tRNA(Met) cytidine acetate ligase, found in Clostridium botulinum (strain Kyoto / Type A2).